We begin with the raw amino-acid sequence, 501 residues long: MKKISLLLASLCALFLVACSNQKQADGKLNIVTTFYPVYEFTKQVAGDTANVELLIGAGTEPHEYEPSAKAVAKIQDADTFVYENENMETWVPKLLDTLDKKKVKTIKATGDMLLLPGGEEEEGDHDHGEEGHHHEFDPHVWLSPVRAIKLVEHIRDSLSADYPDKKETFEKNAAAYIEKLQALDKAYAEGLSQAKQKSFVTQHAAFNYLALDYGLKQVAISGLSPDAEPSAARLAELTEYVKKNKIAYIYFEENASQALANTLSKEAGVKTDVLNPLESLTEEDTKAGENYISVMEKNLKALKQTTDQEGPAIEPEKAEDTKTVQNGYFEDAAVKDRTLSDYAGNWQSVYPFLEDGTFDQVFDYKAKLTGKMTQAEYKAYYTKGYHTDVTKINITDNTMEFVQGGQSKKYTYKYVGKKILTYKKGNRGVRFLFEATDADAGQFKYVQFSDHNVAPVKAEHFHIFFGGTSQEALFEEMDNWPTYYPDNLSGQEIAQEMLAH.

The signal sequence occupies residues 1–18 (MKKISLLLASLCALFLVA). A lipid anchor (N-palmitoyl cysteine) is attached at C19. C19 carries the S-diacylglycerol cysteine lipid modification. H63 contributes to the Zn(2+) binding site. Residues 116–136 (LPGGEEEEGDHDHGEEGHHHE) are disordered. A his-rich loop region spans residues 120 to 136 (EEEEGDHDHGEEGHHHE). The segment covering 125–136 (DHDHGEEGHHHE) has biased composition (basic and acidic residues). The Zn(2+) site is built by H140, H204, and E279.

It belongs to the bacterial solute-binding protein 9 family.

It localises to the cell membrane. Functionally, part of the ATP-binding cassette (ABC) transport system AdcABC involved in zinc import. Binds zinc with high affinity and specificity and delivers it to the membrane permease for translocation into the cytoplasm. The chain is Zinc-binding lipoprotein AdcA (adcA) from Streptococcus pneumoniae serotype 4 (strain ATCC BAA-334 / TIGR4).